The chain runs to 75 residues: Exodeoxyribonuclease 7 small subunit (75 aa).

The protein belongs to the XseB family. As to quaternary structure, heterooligomer composed of large and small subunits.

It localises to the cytoplasm. The catalysed reaction is Exonucleolytic cleavage in either 5'- to 3'- or 3'- to 5'-direction to yield nucleoside 5'-phosphates.. In terms of biological role, bidirectionally degrades single-stranded DNA into large acid-insoluble oligonucleotides, which are then degraded further into small acid-soluble oligonucleotides. The protein is Exodeoxyribonuclease 7 small subunit of Geobacter sp. (strain M21).